The following is a 241-amino-acid chain: 3-dehydroquinate dehydratase (241 aa).

Residues 35–37 and arginine 70 contribute to the 3-dehydroquinate site; that span reads ELR. Residue histidine 133 is the Proton donor/acceptor of the active site. The active-site Schiff-base intermediate with substrate is the lysine 160. Residues arginine 202 and glutamine 225 each coordinate 3-dehydroquinate.

This sequence belongs to the type-I 3-dehydroquinase family. As to quaternary structure, homodimer.

The enzyme catalyses 3-dehydroquinate = 3-dehydroshikimate + H2O. Its pathway is metabolic intermediate biosynthesis; chorismate biosynthesis; chorismate from D-erythrose 4-phosphate and phosphoenolpyruvate: step 3/7. Involved in the third step of the chorismate pathway, which leads to the biosynthesis of aromatic amino acids. Catalyzes the cis-dehydration of 3-dehydroquinate (DHQ) and introduces the first double bond of the aromatic ring to yield 3-dehydroshikimate. In Staphylococcus haemolyticus (strain JCSC1435), this protein is 3-dehydroquinate dehydratase.